A 984-amino-acid chain; its full sequence is Ephrin type-B receptor 1 (984 aa).

An N-terminal signal peptide occupies residues 1-17 (MALDYLLLLLLASAVAA). At 18–540 (MEETLMDTRT…YKSELREQLP (523 aa)) the chain is on the extracellular side. The region spanning 19–201 (EETLMDTRTA…FFKKCPSIVQ (183 aa)) is the Eph LBD domain. Fibronectin type-III domains follow at residues 322-432 (VPSG…TNQA) and 433-528 (APST…TLTD). N-linked (GlcNAc...) asparagine glycosylation is found at N334, N426, and N480. The helical transmembrane segment at 541–563 (LIAGSAAAGVVFVVSLVAISIVC) threads the bilayer. At 564 to 984 (SRKRAYSKEA…QISQSPTAMA (421 aa)) the chain is on the cytoplasmic side. The residue at position 600 (Y600) is a Phosphotyrosine. In terms of domain architecture, Protein kinase spans 619–882 (VKIEEVIGAG…EIVNTLDKMI (264 aa)). Residues 625 to 633 (IGAGEFGEV) and K651 contribute to the ATP site. Residue D744 is the Proton acceptor of the active site. Residues 911-975 (TAFTTVDDWL…LNSIHSMRVQ (65 aa)) form the SAM domain. Y928 carries the post-translational modification Phosphotyrosine; by autocatalysis. Positions 982 to 984 (AMA) match the PDZ-binding motif.

The protein belongs to the protein kinase superfamily. Tyr protein kinase family. Ephrin receptor subfamily. As to quaternary structure, heterotetramer upon binding of the ligand. The heterotetramer is composed of an ephrin dimer and a receptor dimer. Oligomerization is probably required to induce biological responses. Interacts with EPHB6; transphosphorylates EPHB6 to form an active signaling complex. Interacts with PICK1. Interacts (through Tyr-594) with NCK1 (via SH2 domain); activates the JUN cascade to regulate cell adhesion. The ligand-activated form interacts (through Tyr-928) with GRB7 and GRB10 (via SH2 domains). The ligand-activated form interacts (residues within the catalytic domain) with GRB2 (via SH2 domain). Interacts with GRB2, SHC1 and SRC; activates the MAPK/ERK cascade to regulate cell migration. Interacts with CBL; regulates receptor degradation through ubiquitination. Interacts with ACP1. In terms of processing, phosphorylated. Autophosphorylation is stimulated by the ligand EFNB1. Required for interaction with SH2 domain-containing interactors, for activation of the MAPK/ERK and JUN signaling cascades and for ubiquitination by CBL. Post-translationally, ubiquitinated; (EFNB1)ligand-induced poly- and/or multi-ubiquitination by CBL is regulated by SRC and leads to lysosomal degradation. In terms of tissue distribution, preferentially expressed in brain.

It is found in the cell membrane. It localises to the early endosome membrane. The protein resides in the cell projection. The protein localises to the dendrite. The enzyme catalyses L-tyrosyl-[protein] + ATP = O-phospho-L-tyrosyl-[protein] + ADP + H(+). In terms of biological role, receptor tyrosine kinase which binds promiscuously transmembrane ephrin-B family ligands residing on adjacent cells, leading to contact-dependent bidirectional signaling into neighboring cells. The signaling pathway downstream of the receptor is referred to as forward signaling while the signaling pathway downstream of the ephrin ligand is referred to as reverse signaling. Cognate/functional ephrin ligands for this receptor include EFNB1, EFNB2 and EFNB3. During nervous system development, regulates retinal axon guidance redirecting ipsilaterally ventrotemporal retinal ganglion cells axons at the optic chiasm midline. This probably requires repulsive interaction with EFNB2. In the adult nervous system together with EFNB3, regulates chemotaxis, proliferation and polarity of the hippocampus neural progenitors. In addition to its role in axon guidance also plays an important redundant role with other ephrin-B receptors in development and maturation of dendritic spines and synapse formation. May also regulate angiogenesis. More generally, may play a role in targeted cell migration and adhesion. Upon activation by EFNB1 and probably other ephrin-B ligands activates the MAPK/ERK and the JNK signaling cascades to regulate cell migration and adhesion respectively. Involved in the maintenance of the pool of satellite cells (muscle stem cells) by promoting their self-renewal and reducing their activation and differentiation. The chain is Ephrin type-B receptor 1 (EPHB1) from Homo sapiens (Human).